The following is a 79-amino-acid chain: MNKTIEYQKEFLKENNQLLSIPVKKNILKEILQNDEQDTIITNCITKEVSINLDLIKNPKVLYSIYIMVVEYLKSINIA.

Belongs to the asfivirus D79L family.

This is an uncharacterized protein from African swine fever virus (strain Badajoz 1971 Vero-adapted) (Ba71V).